The sequence spans 131 residues: NADPH-dependent 7-cyano-7-deazaguanine reductase (131 aa).

Cysteine 48 (thioimide intermediate) is an active-site residue. Aspartate 55 functions as the Proton donor in the catalytic mechanism. Substrate is bound by residues 70–72 and 89–90; these read VEL and QE.

The protein belongs to the GTP cyclohydrolase I family. QueF type 1 subfamily.

The protein resides in the cytoplasm. It catalyses the reaction 7-aminomethyl-7-carbaguanine + 2 NADP(+) = 7-cyano-7-deazaguanine + 2 NADPH + 3 H(+). Its pathway is tRNA modification; tRNA-queuosine biosynthesis. Catalyzes the NADPH-dependent reduction of 7-cyano-7-deazaguanine (preQ0) to 7-aminomethyl-7-deazaguanine (preQ1). This chain is NADPH-dependent 7-cyano-7-deazaguanine reductase, found in Caldicellulosiruptor bescii (strain ATCC BAA-1888 / DSM 6725 / KCTC 15123 / Z-1320) (Anaerocellum thermophilum).